The chain runs to 101 residues: Small ribosomal subunit protein uS14 (101 aa).

Residues 1–11 (MAKKSSVEKNN) show a composition bias toward basic and acidic residues. The segment at 1–22 (MAKKSSVEKNNRRQRMVKNAAA) is disordered. The span at 12–22 (RRQRMVKNAAA) shows a compositional bias: basic residues.

Belongs to the universal ribosomal protein uS14 family. Part of the 30S ribosomal subunit. Contacts proteins S3 and S10.

Binds 16S rRNA, required for the assembly of 30S particles and may also be responsible for determining the conformation of the 16S rRNA at the A site. In Afipia carboxidovorans (strain ATCC 49405 / DSM 1227 / KCTC 32145 / OM5) (Oligotropha carboxidovorans), this protein is Small ribosomal subunit protein uS14.